We begin with the raw amino-acid sequence, 61 residues long: Protein A40 homolog (61 aa).

The Cytoplasmic segment spans residues 1 to 11 (MTMNKPKTNYA). The helical; Signal-anchor for type II membrane protein transmembrane segment at 12-32 (GYACCVICGLIVGIIFTATLL) threads the bilayer. The Extracellular segment spans residues 33–61 (KAVERKLIHTPLIDKTIKDAYIREDCPTD).

The protein belongs to the poxviridae A40 protein family.

The protein localises to the host membrane. This chain is Protein A40 homolog (A45R), found in Homo sapiens (Human).